Consider the following 131-residue polypeptide: Hyastatin (131 aa).

A signal peptide spans 1-16; it reads MRVLLILVSLAALAHA. 3 disulfide bridges follow: Cys103-Cys117, Cys107-Cys124, and Cys118-Cys125. Lys130 bears the Lysine amide mark.

Strongly expressed in hemocytes, with weaker expression in gills and epidermis. Expressed at low levels in hepatopancreas.

It localises to the cytoplasmic granule. In terms of biological role, antimicrobial peptide. Has strong antibacterial activity against the Gram-positive bacterium C.glutamicum (MIC=0.4 uM) and the Gram-negative bacterium E.coli (MIC=12.5 uM). Has weak antibacterial activity against the Gram-positive bacterium S.aureus (MIC&gt;50 uM) and the Gram-negative bacterium P.aeruginosa (MIC&gt;50 uM). Has antifungal activity against S.cerevisiae (MIC=12.5) and C.albicans (MIC=6.3 uM). Has weak antifungal activity against the mold B.cinerea. Presents chitin-binding activity. The chain is Hyastatin from Hyas araneus (Atlantic lyre crab).